A 367-amino-acid chain; its full sequence is Putrescine-binding periplasmic protein SpuD (367 aa).

A signal peptide spans 1 to 24 (MMKRFGKTLLALTLAGSVAGMAQA). 36 to 37 (SD) provides a ligand contact to putrescine. An intrachain disulfide couples Cys173 to Cys236. Asp244 and Asp275 together coordinate putrescine.

It belongs to the bacterial solute-binding protein PotD/PotF family.

The protein localises to the periplasm. It localises to the secreted. In terms of biological role, putrescine-binding protein probably required for putrescine uptake into cells. Binds putrescine with high affinity, spermidine with relatively low affinity. Does not bind cadaverine or spermine. Putrescine binding induces large inter-domain conformational changes. This chain is Putrescine-binding periplasmic protein SpuD (spuD), found in Pseudomonas aeruginosa (strain UCBPP-PA14).